A 260-amino-acid chain; its full sequence is Thiazole synthase (260 aa).

Catalysis depends on Lys96, which acts as the Schiff-base intermediate with DXP. 1-deoxy-D-xylulose 5-phosphate contacts are provided by residues Gly157, 184–185 (AG), and 206–207 (NT).

This sequence belongs to the ThiG family. As to quaternary structure, homotetramer. Forms heterodimers with either ThiH or ThiS.

It localises to the cytoplasm. It catalyses the reaction [ThiS sulfur-carrier protein]-C-terminal-Gly-aminoethanethioate + 2-iminoacetate + 1-deoxy-D-xylulose 5-phosphate = [ThiS sulfur-carrier protein]-C-terminal Gly-Gly + 2-[(2R,5Z)-2-carboxy-4-methylthiazol-5(2H)-ylidene]ethyl phosphate + 2 H2O + H(+). It functions in the pathway cofactor biosynthesis; thiamine diphosphate biosynthesis. In terms of biological role, catalyzes the rearrangement of 1-deoxy-D-xylulose 5-phosphate (DXP) to produce the thiazole phosphate moiety of thiamine. Sulfur is provided by the thiocarboxylate moiety of the carrier protein ThiS. In vitro, sulfur can be provided by H(2)S. This chain is Thiazole synthase, found in Rhodopseudomonas palustris (strain BisA53).